The primary structure comprises 297 residues: Alpha-tubulin N-acetyltransferase 1 (297 aa).

Positions 1–186 (MEFDFDVHKI…NNFVVFDGFF (186 aa)) constitute an N-acetyltransferase domain. Acetyl-CoA-binding positions include 120-133 (FYIHETLQRHGFGK) and 156-165 (SEKFLSFLRK). A disordered region spans residues 269-297 (LHRTANSEQEDHSQRRRTSSLNRPQSIHH). Over residues 287–297 (SSLNRPQSIHH) the composition is skewed to polar residues.

This sequence belongs to the acetyltransferase ATAT1 family.

The protein resides in the cytoplasm. The protein localises to the membrane. It is found in the clathrin-coated pit. Its subcellular location is the cell junction. It localises to the focal adhesion. The protein resides in the cell projection. The protein localises to the axon. It is found in the cytoskeleton. Its subcellular location is the spindle. The catalysed reaction is L-lysyl-[alpha-tubulin] + acetyl-CoA = N(6)-acetyl-L-lysyl-[alpha-tubulin] + CoA + H(+). Specifically acetylates 'Lys-40' in alpha-tubulin on the lumenal side of microtubules. Promotes microtubule destabilization and accelerates microtubule dynamics; this activity may be independent of acetylation activity. Acetylates alpha-tubulin with a slow enzymatic rate, due to a catalytic site that is not optimized for acetyl transfer. Enters the microtubule through each end and diffuses quickly throughout the lumen of microtubules. Acetylates only long/old microtubules because of its slow acetylation rate since it does not have time to act on dynamically unstable microtubules before the enzyme is released. May be involved in neuron development. This Xenopus tropicalis (Western clawed frog) protein is Alpha-tubulin N-acetyltransferase 1.